A 1840-amino-acid chain; its full sequence is MKAPHSATYQDNYADAAMTARTRPSMDMDQQRNRNQAELRLLPAQRTSTSAFESPDLRFNKARRRRRSEQVPPVVVEYRRSYRVLIVSALLVSLAASFVTLSAGFQLDGSQNSFYTFRKWYTGLNGTLELEFKTEQPNGLVLYTDDGGTYDFFELKLVEGALRLRYNLGGGAQIITVGRELHDGHWHKVQVLRNDEQTSLIVDGVSQQRSTKGKEFQFGKFASNSDVYVGGMPNWYSSKLALLALPSVIFEPRFRGAIRNLVYADQPGGSTRRQEIKQQRDIKCGDVPCDHGELPARERPLRGVRGGNTTDACERNDPCQHGGICISTDSGPICECRNLEYDGQYCEKEKAPSEATFRGTQFLSYDLGQTGAEPIVSAQDAISFYFRTRQPNGLLFYTGHGTDYLNLALRDGGVSLTMGLANGKQEMHIKPSKVRFDDHQWHKVTVHRRIQEISSITSFCRLVTVVDDVYTDHSHIAGKFTMLSSSRVYVGGAVNPRALLGARVHTNFVGCLRKVEFSADTLNLNLIDLAKSGSKLIQVAGNLEYQCPSGDPQDPVTFTTRESHLVLPPWETGKQSSISFKFRTKEPNGIIVLATGSKQPRAKNPVLIAIELLNGHIYIHLDLGSGASKVRASRRRVDDGDWHDLILRRNGRDAKVSVDGVWNDFRTPGDGTILELDGHMYLGGVGPAYNSVSWPAAIWTATLRQGFVGCLRDLVLSGKAIDIAAFARVQDSASVKPSCHVQANVCNGNPCLNGGTCLEGWNRPICDCSATLYGGPTCGRELATLAFNGSQHMTIWLGNGQGTKTQTEELVIRFKTSRPAGLLLLTSAESNSPDRLEIALVAGRVRASVRLSDREKNLLAGQSVLNDNNWHTIRFSRRASNLRLQVDGAPPVRGMLSETILGRHSTMEIRSVHLGGLFHAEEEIQMTSTMPNFVGQMQGLVFNGQRYLDIVKSLGPELSALPSATFKLTARFVNSPAGQPYHAATFRSKHSYVGLAMLKAYNSISIDFRFKTVEPNGLLVFNGGRRNDFVAVELVNGHIHYTFDLGDGPVTMRDKSRIHMNDNRWHQVSIRRPGPKTHTLTVDDSFEIISLTGNNMHLELAGILYIGGVFKDMYSKLPASISSRSGFEGCLASLDLGDASPSLTSDAVVPSSLVVSGCEGPTKCSQNACANRGNCVQQWNAYACECDMTSYTGPTCYDESIAYEFGNNKGMVQYTFPENAQADTEEDNIALGFITTRPDAVLLRVESATTQDYMELEIVEGNIFMVYNIGSVDLPLGEIGTKVNDNAYHVVRFQRKGGNATLQLDDYNVQALTPQSHHSTVFNTMSNVQVGGKFSRNGRNRIERPFAGVIAGLSVNKLRILDLAVERDPHITIRGDVQLVTGVLDRNDLQRMQQTPASGYPGALDDLIFSGAGSGCRGDDEDECTPPFESGSGDDLITPVYVPPTKQTTTSQQGNSLSTGGSSSGGVITNGTERACDDEDCVHGSGDYGETTEQFTSTSTARGSESNNEMVTITTTGRSDVTTEQHQGSSSSSSSGSTPSYATTQSSSSSSSGGSAASTPGQVSTTSSVATSSTQRATSSSTSTSSSTTSTTTTTTTTQATPPPEIRSTVTERETTPYDIYIAGGGMGGSGRNDHDRMQLPDEHHPLPPLPPPIPPQDPPPYGPYGGNTYNTNMNNYRPKGKGGRINSIEEERTAMIIGIVAGILIAVVLVILLVLWLKSNGDRGYKTESEKAAAYGSHNPNAALLGNTSTNGSYHQQRQHHMHGGGGGGGAGQQQHHAQQQMHNGHNGNGNGGGGGGGGMMSSGSGSLGYGSDGRPQMAGLVQPKAKKRDSKDVKEWYV.

The interval 1-50 is disordered; sequence MKAPHSATYQDNYADAAMTARTRPSMDMDQQRNRNQAELRLLPAQRTSTS. The Extracellular segment spans residues 1–1696; sequence MKAPHSATYQ…NSIEEERTAM (1696 aa). Residues 24-37 are compositionally biased toward basic and acidic residues; that stretch reads PSMDMDQQRNRNQA. The Laminin G-like 1 domain maps to 104–289; the sequence is GFQLDGSQNS…RDIKCGDVPC (186 aa). Positions 309 to 347 constitute an EGF-like 1 domain; the sequence is TTDACERNDPCQHGGICISTDSGPICECRNLEYDGQYCE. 8 disulfides stabilise this stretch: Cys-313-Cys-325, Cys-319-Cys-334, Cys-336-Cys-346, Cys-511-Cys-547, Cys-710-Cys-739, Cys-746-Cys-757, Cys-751-Cys-766, and Cys-768-Cys-778. 2 Laminin G-like domains span residues 352–547 and 554–739; these read PSEA…EYQC and DPVT…KPSC. Residues 742-779 enclose the EGF-like 2 domain; sequence QANVCNGNPCLNGGTCLEGWNRPICDCSATLYGGPTCG. Laminin G-like domains follow at residues 784–964 and 982–1158; these read TLAF…LPSA and HAAT…VSGC. 4 disulfides stabilise this stretch: Cys-1130-Cys-1158, Cys-1164-Cys-1175, Cys-1169-Cys-1184, and Cys-1186-Cys-1196. Residues 1160–1197 enclose the EGF-like 3 domain; the sequence is GPTKCSQNACANRGNCVQQWNAYACECDMTSYTGPTCY. A Laminin G-like 6 domain is found at 1201–1416; that stretch reads IAYEFGNNKG…LIFSGAGSGC (216 aa). Residues 1411 to 1651 form a disordered region; that stretch reads GAGSGCRGDD…DEHHPLPPLP (241 aa). Low complexity predominate over residues 1447–1472; sequence QTTTSQQGNSLSTGGSSSGGVITNGT. The span at 1491–1527 shows a compositional bias: polar residues; it reads TTEQFTSTSTARGSESNNEMVTITTTGRSDVTTEQHQ. The segment covering 1528–1600 has biased composition (low complexity); the sequence is GSSSSSSSGS…TTTTTTTTQA (73 aa). Residues 1632–1646 show a composition bias toward basic and acidic residues; the sequence is RNDHDRMQLPDEHHP. Residues 1697 to 1717 form a helical membrane-spanning segment; the sequence is IIGIVAGILIAVVLVILLVLW. Residues 1718–1840 lie on the Cytoplasmic side of the membrane; that stretch reads LKSNGDRGYK…DSKDVKEWYV (123 aa). A disordered region spans residues 1737 to 1840; it reads GSHNPNAALL…DSKDVKEWYV (104 aa). Residues 1747–1757 show a composition bias toward polar residues; that stretch reads GNTSTNGSYHQ. A compositionally biased stretch (low complexity) spans 1774-1787; the sequence is QQQHHAQQQMHNGH. Over residues 1788 to 1813 the composition is skewed to gly residues; the sequence is NGNGNGGGGGGGGMMSSGSGSLGYGS. The Zn(2+) site is built by Asp-1831 and Asp-1834. Over residues 1831–1840 the composition is skewed to basic and acidic residues; the sequence is DSKDVKEWYV. Residues 1837–1840 carry the PDZ domain binding motif; that stretch reads EWYV.

This sequence belongs to the neurexin family. As to quaternary structure, interacts (via C-terminal PDZ binding motif) with CASK (via PDZ domain). Interacts (via cytoplasmic domain) with apolpp/ApoLI; the interaction supports apolpp/ApoLI protein stability. Interact (via cytoplasmic domain) with Spn/Spinophilin. Interacts with RhoGAP100F/Syd-1 (via PDZ domain); RhoGAP100F/Syd-1 may recruit Nrx-1 to the presynaptic active zone. As to expression, expressed in brain, with expression in medulla, lamina, lobula, lobula plate, mushroom body and antennal lobe, and in retina (at protein level). Expressed in rabdomere of photoreceptor cells (at protein level).

It localises to the synaptic cell membrane. Its subcellular location is the presynaptic cell membrane. The protein localises to the postsynaptic cell membrane. Functionally, neuronal cell adhesion protein involved in synapse formation, development of synaptic active zones, synaptic regulation and visual function. Plays a role in cell adhesion between the pre- and the postsynaptic cell. Required for proper proliferation of synaptic boutons during larval development, a process necessary for coordinated matching of pre-and postsynaptic compartments. Promotes presynaptic active zone formation and neurotransmitter release. Spn/Spinophilin fine-tunes nrx-1/nlg1 signaling at the pre-synapse to control active zone number and functionality and thereby optimizing action potential-induced exocytosis. Required for synapse formation in central nervous system. By regulating synapse formation, may play a role in larval associative learning. Together with RhoGAP100F/syd-1, controls synapse formation at the neuromuscular junction. Essential for synaptic vesicle cycling, which plays critical roles in neurotransmission at neuromuscular junctions (NMJ). Regulated and restricts formation of glutamate receptor clusters. Mediates retinoid transport and subsequent rhodopsin maturation and may regulate lipoprotein function; thereby playing a role in vision. Regulates sleep, circadian rhythm and synaptic plasticity. Together with CASK, required for locomotion. The sequence is that of Neurexin 1 from Drosophila melanogaster (Fruit fly).